Consider the following 485-residue polypeptide: Protein DETOXIFICATION 14 (485 aa).

12 consecutive transmembrane segments (helical) span residues 30-50 (LSYI…LQVI), 68-88 (IAVS…ASAL), 112-132 (IVSL…IGDI), 147-167 (GKFA…QPLV), 175-195 (LILP…VLCW), 207-227 (GAAI…GLYM), 259-279 (ASMI…SGIL), 288-308 (VLSV…SLGA), 329-349 (AVYT…AIVF), 372-392 (MAPL…LSGV), 405-425 (VNLA…AFGF), and 432-452 (LWIG…LIVI).

The protein belongs to the multi antimicrobial extrusion (MATE) (TC 2.A.66.1) family.

The protein localises to the membrane. The protein is Protein DETOXIFICATION 14 of Arabidopsis thaliana (Mouse-ear cress).